A 45-amino-acid polypeptide reads, in one-letter code: Myotoxin-3 (45 aa).

Intrachain disulfides connect cysteine 4–cysteine 36, cysteine 11–cysteine 30, and cysteine 18–cysteine 37.

Monomer. As to expression, expressed by the venom gland.

It is found in the secreted. Its function is as follows. Cationic peptide that possesses multiple functions. It acts as a cell-penetrating peptide (CPP), and as a potent voltage-gated potassium channel (Kv) inhibitor. It exhibits antimicrobial activities, hind limb paralysis, and severe muscle necrosis by a non-enzymatic mechanism. The protein is Myotoxin-3 of Crotalus viridis viridis (Prairie rattlesnake).